The following is a 1217-amino-acid chain: Valine--tRNA ligase (1217 aa).

Residues 27–155 form the GST C-terminal domain; it reads NAKQQSQVWQ…ISLCEKMVPV (129 aa). Residues 293–303 carry the 'HIGH' region motif; the sequence is PNVTGSLHLGH. Positions 809–813 match the 'KMSKS' region motif; the sequence is KMSKS. Lysine 812 lines the ATP pocket.

The protein belongs to the class-I aminoacyl-tRNA synthetase family.

The enzyme catalyses tRNA(Val) + L-valine + ATP = L-valyl-tRNA(Val) + AMP + diphosphate. This Takifugu rubripes (Japanese pufferfish) protein is Valine--tRNA ligase (vars1).